The chain runs to 743 residues: Amylovoran biosynthesis protein AmsF (743 aa).

The N-terminal stretch at 1 to 27 is a signal peptide; it reads MKRRELIRTAFSTIVATAALSSVSARA.

To R.meliloti ExoP.

It localises to the periplasm. Its pathway is glycan metabolism; exopolysaccharide biosynthesis. In terms of biological role, involved in the biosynthesis of amylovoran which functions as a virulence factor. May be involved in the polymerization or late modification of the repeating units. This is Amylovoran biosynthesis protein AmsF (amsF) from Erwinia amylovora (Fire blight bacteria).